Here is a 965-residue protein sequence, read N- to C-terminus: Valine--tRNA ligase (965 aa).

Residues 1–22 form a disordered region; that stretch reads MENTPSHINKTEPSLDKTYSPQ. Positions 56–66 match the 'HIGH' region motif; that stretch reads PNVTGSLHMGH. Residues 568 to 572 carry the 'KMSKS' region motif; the sequence is KMSKS. An ATP-binding site is contributed by Lys571. Residues 896–965 are a coiled coil; that stretch reads LIDKATELDR…IEQQATIAAL (70 aa).

It belongs to the class-I aminoacyl-tRNA synthetase family. ValS type 1 subfamily. In terms of assembly, monomer.

It is found in the cytoplasm. The enzyme catalyses tRNA(Val) + L-valine + ATP = L-valyl-tRNA(Val) + AMP + diphosphate. Catalyzes the attachment of valine to tRNA(Val). As ValRS can inadvertently accommodate and process structurally similar amino acids such as threonine, to avoid such errors, it has a 'posttransfer' editing activity that hydrolyzes mischarged Thr-tRNA(Val) in a tRNA-dependent manner. In Yersinia pestis, this protein is Valine--tRNA ligase.